Consider the following 550-residue polypeptide: Arginine--tRNA ligase (550 aa).

A 'HIGH' region motif is present at residues 130-140 (ANPTGPIHLGG).

Belongs to the class-I aminoacyl-tRNA synthetase family. In terms of assembly, monomer.

Its subcellular location is the cytoplasm. It catalyses the reaction tRNA(Arg) + L-arginine + ATP = L-arginyl-tRNA(Arg) + AMP + diphosphate. This chain is Arginine--tRNA ligase, found in Corynebacterium diphtheriae (strain ATCC 700971 / NCTC 13129 / Biotype gravis).